We begin with the raw amino-acid sequence, 237 residues long: MSESQPGASSTTSNKCDSGFIPGDDTFTQWRNIFSILMGKMTDEGKEQFRVARDLRNEAADCKRCEDQRDYLLQYSPVIRYLSDNIRQLGGDLHSHNIYCRRCTNRKAGGFDPEYGILLCANEMKDQGHLEDTMAHEMIHAYDHLRFKVDWSNNLRHAACTEIRASSLSGECRWAREFFRRGQWKFTQQHQECVRRRAILSVRARPGCKDEAHAEKVVNEVWDSCFRDTRPFDEIYR.

H136 is an a divalent metal cation binding site. E137 is a catalytic residue. H140 provides a ligand contact to a divalent metal cation.

It belongs to the peptidase M76 family.

Its subcellular location is the mitochondrion inner membrane. Functionally, has a dual role in the assembly of mitochondrial ATPase. Acts as a protease that removes N-terminal residues of mitochondrial ATPase CF(0) subunit 6 at the intermembrane space side. Also involved in the correct assembly of the membrane-embedded ATPase CF(0) particle, probably mediating association of subunit 6 with the subunit 9 ring. The protein is Mitochondrial inner membrane protease atp23 (atp23) of Aspergillus clavatus (strain ATCC 1007 / CBS 513.65 / DSM 816 / NCTC 3887 / NRRL 1 / QM 1276 / 107).